The chain runs to 623 residues: Glutathione import ATP-binding protein GsiA (623 aa).

2 consecutive ABC transporter domains span residues 15 to 269 (VSGL…QTLL) and 325 to 564 (LRSG…RKLM). ATP-binding positions include 49–56 (GESGSGKS) and 357–364 (GESGSGKS).

It belongs to the ABC transporter superfamily. Glutathione importer (TC 3.A.1.5.11) family. In terms of assembly, the complex is composed of two ATP-binding proteins (GsiA), two transmembrane proteins (GsiC and GsiD) and a solute-binding protein (GsiB).

The protein resides in the cell inner membrane. It carries out the reaction glutathione(out) + ATP + H2O = glutathione(in) + ADP + phosphate + H(+). In terms of biological role, part of the ABC transporter complex GsiABCD involved in glutathione import. Responsible for energy coupling to the transport system. This chain is Glutathione import ATP-binding protein GsiA, found in Salmonella typhi.